The chain runs to 327 residues: Inactive peptidyl-prolyl cis-trans isomerase FKBP6 (327 aa).

A PPIase FKBP-type domain is found at 54 to 143 (DASVLVKYSG…LFEIELLDFL (90 aa)). TPR repeat units follow at residues 171–204 (AATE…LRRR), 219–252 (LPVL…DQKN), and 253–286 (AKAL…QPFN).

It belongs to the FKBP6 family. In terms of assembly, interacts (via TPR repeats) with HSP90. Interacts with HSP72/HSPA2 and CLTC. Interacts with GAPDH; leading to inhibit GAPDH catalytic activity. In terms of tissue distribution, detected in all tissues examined, with higher expression in testis, heart, skeletal muscle, liver, and kidney.

Its subcellular location is the cytoplasm. It localises to the nucleus. Its function is as follows. Has an essential role in spermatogenesis. It is required to repress transposable elements and prevent their mobilization, which is essential for the germline integrity. Acts via the piRNA metabolic process, which mediates the repression of transposable elements during meiosis by forming complexes composed of piRNAs and Piwi proteins and govern the methylation and subsequent repression of transposons. Acts as a co-chaperone via its interaction with HSP90 and is required for the piRNA amplification process, the secondary piRNA biogenesis. May be required together with HSP90 in removal of 16 nucleotide ping-pong by-products from Piwi complexes, possibly facilitating turnover of Piwi complexes. The polypeptide is Inactive peptidyl-prolyl cis-trans isomerase FKBP6 (FKBP6) (Homo sapiens (Human)).